We begin with the raw amino-acid sequence, 437 residues long: Ribosomal protein uS12 methylthiotransferase RimO (437 aa).

The region spanning 4-114 (PRVSFVSLGC…VMSAVHEAVP (111 aa)) is the MTTase N-terminal domain. [4Fe-4S] cluster is bound by residues C13, C49, C78, C145, C149, and C152. One can recognise a Radical SAM core domain in the interval 131-369 (LTPRHYAYLK…MAKQQQISTN (239 aa)). Residues 372–437 (KKKVGKRLPV…DAYDLHGIAV (66 aa)) enclose the TRAM domain.

This sequence belongs to the methylthiotransferase family. RimO subfamily. It depends on [4Fe-4S] cluster as a cofactor.

The protein resides in the cytoplasm. The enzyme catalyses L-aspartate(89)-[ribosomal protein uS12]-hydrogen + (sulfur carrier)-SH + AH2 + 2 S-adenosyl-L-methionine = 3-methylsulfanyl-L-aspartate(89)-[ribosomal protein uS12]-hydrogen + (sulfur carrier)-H + 5'-deoxyadenosine + L-methionine + A + S-adenosyl-L-homocysteine + 2 H(+). Functionally, catalyzes the methylthiolation of an aspartic acid residue of ribosomal protein uS12. This is Ribosomal protein uS12 methylthiotransferase RimO from Brucella anthropi (strain ATCC 49188 / DSM 6882 / CCUG 24695 / JCM 21032 / LMG 3331 / NBRC 15819 / NCTC 12168 / Alc 37) (Ochrobactrum anthropi).